A 624-amino-acid polypeptide reads, in one-letter code: DNA-directed RNA polymerase subunit gamma (624 aa).

Zn(2+) contacts are provided by cysteine 70, cysteine 72, cysteine 85, and cysteine 88. Positions 466, 468, and 470 each coordinate Mg(2+).

The protein belongs to the RNA polymerase beta' chain family. RpoC1 subfamily. As to quaternary structure, in cyanobacteria the RNAP catalytic core is composed of 2 alpha, 1 beta, 1 beta', 1 gamma and 1 omega subunit. When a sigma factor is associated with the core the holoenzyme is formed, which can initiate transcription. Requires Mg(2+) as cofactor. Zn(2+) is required as a cofactor.

It carries out the reaction RNA(n) + a ribonucleoside 5'-triphosphate = RNA(n+1) + diphosphate. DNA-dependent RNA polymerase catalyzes the transcription of DNA into RNA using the four ribonucleoside triphosphates as substrates. This chain is DNA-directed RNA polymerase subunit gamma, found in Synechococcus elongatus (strain ATCC 33912 / PCC 7942 / FACHB-805) (Anacystis nidulans R2).